The following is a 129-amino-acid chain: Azurin-1 (129 aa).

The Plastocyanin-like domain maps to 1–129; the sequence is AECSVDIAGN…LMKGVLKLVD (129 aa). A disulfide bridge links cysteine 3 with cysteine 26. 4 residues coordinate Cu cation: histidine 46, cysteine 112, histidine 117, and methionine 121.

The protein resides in the periplasm. Transfers electrons from cytochrome c551 to cytochrome oxidase. This Alcaligenes xylosoxydans xylosoxydans (Achromobacter xylosoxidans) protein is Azurin-1.